An 811-amino-acid polypeptide reads, in one-letter code: Phenylalanine--tRNA ligase beta subunit (811 aa).

The 113-residue stretch at 39–151 folds into the tRNA-binding domain; that stretch reads RTWAAGVVVG…AGLQAGQPVG (113 aa). Positions 409–495 constitute a B5 domain; that stretch reads EPEHSITLRL…RLYGYDNFGE (87 aa). Mg(2+) is bound by residues Asp-473, Asp-479, Glu-482, and Glu-483. The FDX-ACB domain maps to 717–810; sequence SSFPASDRDL…LVERFRVTLR (94 aa).

Belongs to the phenylalanyl-tRNA synthetase beta subunit family. Type 1 subfamily. Tetramer of two alpha and two beta subunits. Mg(2+) serves as cofactor.

It is found in the cytoplasm. It catalyses the reaction tRNA(Phe) + L-phenylalanine + ATP = L-phenylalanyl-tRNA(Phe) + AMP + diphosphate + H(+). This chain is Phenylalanine--tRNA ligase beta subunit, found in Synechococcus sp. (strain ATCC 27144 / PCC 6301 / SAUG 1402/1) (Anacystis nidulans).